A 451-amino-acid chain; its full sequence is uncharacterized protein (451 aa).

Residues 50–147 (RFEHSLGTMF…DVDADRMDYL (98 aa)) enclose the HD domain.

This is an uncharacterized protein from Methanocaldococcus jannaschii (strain ATCC 43067 / DSM 2661 / JAL-1 / JCM 10045 / NBRC 100440) (Methanococcus jannaschii).